Here is a 170-residue protein sequence, read N- to C-terminus: Photosystem II extrinsic protein V (170 aa).

An N-terminal signal peptide occupies residues 1 to 33; that stretch reads MASLFASLGRSLIKLLIVLPVIIGLSISSPAMA. Positions 70, 73, 74, and 125 each coordinate heme c.

Belongs to the cytochrome c family. PsbV subfamily. In terms of assembly, PSII is composed of 1 copy each of membrane proteins PsbA, PsbB, PsbC, PsbD, PsbE, PsbF, PsbH, PsbI, PsbJ, PsbK, PsbL, PsbM, PsbT, PsbX, PsbY, Psb30/Ycf12, peripheral proteins PsbO, CyanoQ (PsbQ), PsbU, PsbV and a large number of cofactors. It forms dimeric complexes. It depends on heme c as a cofactor.

It localises to the cellular thylakoid membrane. In terms of biological role, one of the extrinsic, lumenal subunits of photosystem II (PSII). PSII is a light-driven water plastoquinone oxidoreductase, using light energy to abstract electrons from H(2)O, generating a proton gradient subsequently used for ATP formation. The extrinsic proteins stabilize the structure of photosystem II oxygen-evolving complex (OEC), the ion environment of oxygen evolution and protect the OEC against heat-induced inactivation. Low-potential cytochrome c that plays a role in the OEC of PSII. This is Photosystem II extrinsic protein V from Prochlorococcus marinus (strain MIT 9313).